We begin with the raw amino-acid sequence, 331 residues long: Biotin synthase (331 aa).

Positions 53 to 272 (NHVETASLLS…LATARVMMPR (220 aa)) constitute a Radical SAM core domain. Positions 68, 72, and 75 each coordinate [4Fe-4S] cluster. 4 residues coordinate [2Fe-2S] cluster: cysteine 112, cysteine 143, cysteine 203, and arginine 276.

Belongs to the radical SAM superfamily. Biotin synthase family. Homodimer. [4Fe-4S] cluster serves as cofactor. Requires [2Fe-2S] cluster as cofactor.

The catalysed reaction is (4R,5S)-dethiobiotin + (sulfur carrier)-SH + 2 reduced [2Fe-2S]-[ferredoxin] + 2 S-adenosyl-L-methionine = (sulfur carrier)-H + biotin + 2 5'-deoxyadenosine + 2 L-methionine + 2 oxidized [2Fe-2S]-[ferredoxin]. It participates in cofactor biosynthesis; biotin biosynthesis; biotin from 7,8-diaminononanoate: step 2/2. In terms of biological role, catalyzes the conversion of dethiobiotin (DTB) to biotin by the insertion of a sulfur atom into dethiobiotin via a radical-based mechanism. The protein is Biotin synthase of Bradyrhizobium diazoefficiens (strain JCM 10833 / BCRC 13528 / IAM 13628 / NBRC 14792 / USDA 110).